Here is a 523-residue protein sequence, read N- to C-terminus: Polyamine aminopropyltransferase (523 aa).

The next 7 helical transmembrane spans lie at 20 to 40, 51 to 71, 88 to 108, 116 to 136, 164 to 184, 186 to 206, and 215 to 235; these read VLLA…LALL, IVAT…GALL, AVLG…FAFL, LVLA…VPLL, LGAL…LGMI, GAAV…IFLL, and LVTA…LLVH. The segment at 203 to 478 is spermidine synthase; it reads IFLLRHVVSG…APTPAVPSTA (276 aa). Residues 231-465 enclose the PABS domain; the sequence is TLLVHSHDIE…GDWGFALARL (235 aa). Gln-261 is an S-methyl-5'-thioadenosine binding site. Asp-313 provides a ligand contact to spermidine. S-methyl-5'-thioadenosine is bound by residues Glu-333 and 365 to 366; that span reads DA. Asp-386 functions as the Proton acceptor in the catalytic mechanism.

This sequence belongs to the spermidine/spermine synthase family. Homodimer or homotetramer.

It is found in the cell membrane. The enzyme catalyses S-adenosyl 3-(methylsulfanyl)propylamine + putrescine = S-methyl-5'-thioadenosine + spermidine + H(+). Its pathway is amine and polyamine biosynthesis; spermidine biosynthesis; spermidine from putrescine: step 1/1. Catalyzes the irreversible transfer of a propylamine group from the amino donor S-adenosylmethioninamine (decarboxy-AdoMet) to putrescine (1,4-diaminobutane) to yield spermidine. The sequence is that of Polyamine aminopropyltransferase from Mycobacterium bovis (strain ATCC BAA-935 / AF2122/97).